The primary structure comprises 183 residues: Ankyrin repeat domain-containing protein 39 (183 aa).

ANK repeat units follow at residues 30–59, 63–92, 96–125, and 129–158; these read DFERGIWSAALNGDLGRVKYLIQKAVDPSQ, AGYTALHYASRNGHYAVCQFLLESGAKCDA, GGATALHRASYCGHTDIARLLLSHGSNPRL, and DGMTSLHKAAEKGHVDICSLLLQHSPALKA. Position 153 is a phosphoserine (S153).

This sequence belongs to the ANKRD39 family.

In Bos taurus (Bovine), this protein is Ankyrin repeat domain-containing protein 39 (ANKRD39).